We begin with the raw amino-acid sequence, 168 residues long: Short form salivary protein D7R2 (168 aa).

A signal peptide spans 1 to 21 (MFKKLLLSVGLVWCLISLGQA). Intrachain disulfides connect C30–C62, C43–C168, and C101–C120. Noradrenaline contacts are provided by E31 and R46. E31 provides a ligand contact to serotonin. H59, Y118, D135, and E138 together coordinate serotonin. The histamine site is built by Y118, D135, and E138. D135 and E138 together coordinate noradrenaline.

It belongs to the PBP/GOBP family. Female saliva (at protein level). Female salivary gland. Not detected in female carcass without salivary glands. Not detected in male tissues.

It is found in the secreted. Its function is as follows. Modulates blood feeding of female mosquitoes on vertebrate species by binding and sequestering different mediators involved in the host response. Binds serotonin, noradrenaline, histamine and adrenaline. Inhibits histamine-, serotonin- and noradrenaline-induced smooth muscle contraction. Exhibits vasodilating activity. This chain is Short form salivary protein D7R2, found in Anopheles gambiae (African malaria mosquito).